The following is a 164-amino-acid chain: Lipoprotein signal peptidase (164 aa).

The next 3 helical transmembrane spans lie at 12–32 (WLWL…LILQ), 70–90 (WFFA…MYRS), and 102–122 (ALII…GFVV). Active-site residues include aspartate 123 and aspartate 141. A helical membrane pass occupies residues 137-157 (FNLADTAICVGAALIVLEGFL).

It belongs to the peptidase A8 family.

It is found in the cell inner membrane. The enzyme catalyses Release of signal peptides from bacterial membrane prolipoproteins. Hydrolyzes -Xaa-Yaa-Zaa-|-(S,diacylglyceryl)Cys-, in which Xaa is hydrophobic (preferably Leu), and Yaa (Ala or Ser) and Zaa (Gly or Ala) have small, neutral side chains.. Its pathway is protein modification; lipoprotein biosynthesis (signal peptide cleavage). In terms of biological role, this protein specifically catalyzes the removal of signal peptides from prolipoproteins. The polypeptide is Lipoprotein signal peptidase (Shigella sonnei (strain Ss046)).